The following is a 387-amino-acid chain: Sulfopyruvate decarboxylase (387 aa).

Belongs to the TPP enzyme family. Thiamine diphosphate serves as cofactor.

It carries out the reaction 3-sulfopyruvate + H(+) = sulfoacetaldehyde + CO2. It participates in cofactor biosynthesis; coenzyme M biosynthesis. Its function is as follows. Involved in the biosynthesis of the coenzyme M (2-mercaptoethanesulfonic acid). Catalyzes the decarboxylation of sulfopyruvate to sulfoacetaldehyde. Is not able to decarboxylate the analogous compounds 2-oxoglutarate or 2-oxosuberate. The polypeptide is Sulfopyruvate decarboxylase (Methanosarcina acetivorans (strain ATCC 35395 / DSM 2834 / JCM 12185 / C2A)).